The following is a 137-amino-acid chain: uncharacterized protein (137 aa).

A signal peptide spans 1–21 (MFNRRVLFLSVFSCAVFMLSG). A lipid anchor (N-palmitoyl cysteine) is attached at Cys22. Cys22 is lipidated: S-diacylglycerol cysteine.

Its subcellular location is the membrane. This is an uncharacterized protein from Escherichia coli (strain K12).